A 369-amino-acid polypeptide reads, in one-letter code: Glutamate 5-kinase (369 aa).

K9 lines the ATP pocket. The substrate site is built by S49, D136, and N148. Residues 168-169 and 210-216 contribute to the ATP site; these read TD and TGGMLTK. A PUA domain is found at 275–355; the sequence is QGSIWVDKGA…KGVLIYRDDW (81 aa).

This sequence belongs to the glutamate 5-kinase family.

It is found in the cytoplasm. It catalyses the reaction L-glutamate + ATP = L-glutamyl 5-phosphate + ADP. It participates in amino-acid biosynthesis; L-proline biosynthesis; L-glutamate 5-semialdehyde from L-glutamate: step 1/2. Catalyzes the transfer of a phosphate group to glutamate to form L-glutamate 5-phosphate. This chain is Glutamate 5-kinase, found in Streptococcus pneumoniae (strain ATCC 700669 / Spain 23F-1).